The sequence spans 387 residues: Cystathionine gamma-lyase (387 aa).

Residues R53, Y105, and R110 each coordinate substrate. Residue K202 is modified to N6-(pyridoxal phosphate)lysine. E329 lines the substrate pocket.

This sequence belongs to the trans-sulfuration enzymes family. In terms of assembly, homotetramer. Interacts with CALM in a calcium-dependent manner. It depends on pyridoxal 5'-phosphate as a cofactor.

Its subcellular location is the cytoplasm. The enzyme catalyses L,L-cystathionine + H2O = 2-oxobutanoate + L-cysteine + NH4(+). The catalysed reaction is L-cysteine + H2O = hydrogen sulfide + pyruvate + NH4(+) + H(+). It catalyses the reaction L-homocysteine + H2O = 2-oxobutanoate + hydrogen sulfide + NH4(+) + H(+). It carries out the reaction L-homoserine = 2-oxobutanoate + NH4(+). It participates in amino-acid biosynthesis; L-cysteine biosynthesis; L-cysteine from L-homocysteine and L-serine: step 2/2. Catalyzes the last step in the trans-sulfuration pathway from L-methionine to L-cysteine in a pyridoxal-5'-phosphate (PLP)-dependent manner, which consists on cleaving the L,L-cystathionine molecule into L-cysteine, ammonia and 2-oxobutanoate. Part of the L-cysteine derived from the trans-sulfuration pathway is utilized for biosynthesis of the ubiquitous antioxidant glutathione. Besides its role in the conversion of L-cystathionine into L-cysteine, it utilizes L-cysteine and L-homocysteine as substrates (at much lower rates than L,L-cystathionine) to produce the endogenous gaseous signaling molecule hydrogen sulfide (H2S). The sequence is that of Cystathionine gamma-lyase (cysA) from Dictyostelium discoideum (Social amoeba).